The following is a 207-amino-acid chain: Ribosome maturation factor RimM (207 aa).

Residues 114–207 enclose the PRC barrel domain; the sequence is DDEYYWVDLI…RIDSDWPLDY (94 aa).

It belongs to the RimM family. As to quaternary structure, binds ribosomal protein uS19.

Its subcellular location is the cytoplasm. Functionally, an accessory protein needed during the final step in the assembly of 30S ribosomal subunit, possibly for assembly of the head region. Essential for efficient processing of 16S rRNA. May be needed both before and after RbfA during the maturation of 16S rRNA. It has affinity for free ribosomal 30S subunits but not for 70S ribosomes. This chain is Ribosome maturation factor RimM, found in Bordetella bronchiseptica (strain ATCC BAA-588 / NCTC 13252 / RB50) (Alcaligenes bronchisepticus).